Here is a 527-residue protein sequence, read N- to C-terminus: Glutamate--cysteine ligase (527 aa).

It belongs to the glutamate--cysteine ligase type 1 family. Type 1 subfamily.

It carries out the reaction L-cysteine + L-glutamate + ATP = gamma-L-glutamyl-L-cysteine + ADP + phosphate + H(+). It participates in sulfur metabolism; glutathione biosynthesis; glutathione from L-cysteine and L-glutamate: step 1/2. In Bordetella parapertussis (strain 12822 / ATCC BAA-587 / NCTC 13253), this protein is Glutamate--cysteine ligase.